We begin with the raw amino-acid sequence, 259 residues long: Thiazole synthase (259 aa).

K99 (schiff-base intermediate with DXP) is an active-site residue. 1-deoxy-D-xylulose 5-phosphate contacts are provided by residues G161, 187-188 (AG), and 209-210 (NT).

Belongs to the ThiG family. Homotetramer. Forms heterodimers with either ThiH or ThiS.

The protein resides in the cytoplasm. It carries out the reaction [ThiS sulfur-carrier protein]-C-terminal-Gly-aminoethanethioate + 2-iminoacetate + 1-deoxy-D-xylulose 5-phosphate = [ThiS sulfur-carrier protein]-C-terminal Gly-Gly + 2-[(2R,5Z)-2-carboxy-4-methylthiazol-5(2H)-ylidene]ethyl phosphate + 2 H2O + H(+). The protein operates within cofactor biosynthesis; thiamine diphosphate biosynthesis. In terms of biological role, catalyzes the rearrangement of 1-deoxy-D-xylulose 5-phosphate (DXP) to produce the thiazole phosphate moiety of thiamine. Sulfur is provided by the thiocarboxylate moiety of the carrier protein ThiS. In vitro, sulfur can be provided by H(2)S. The protein is Thiazole synthase of Sulfurimonas denitrificans (strain ATCC 33889 / DSM 1251) (Thiomicrospira denitrificans (strain ATCC 33889 / DSM 1251)).